Consider the following 108-residue polypeptide: Putative pterin-4-alpha-carbinolamine dehydratase (108 aa).

Belongs to the pterin-4-alpha-carbinolamine dehydratase family.

It carries out the reaction (4aS,6R)-4a-hydroxy-L-erythro-5,6,7,8-tetrahydrobiopterin = (6R)-L-erythro-6,7-dihydrobiopterin + H2O. The chain is Putative pterin-4-alpha-carbinolamine dehydratase from Bordetella avium (strain 197N).